The chain runs to 336 residues: Fructose-1,6-bisphosphatase class 1 (336 aa).

Positions 92, 115, 117, and 118 each coordinate Mg(2+). Substrate contacts are provided by residues 118-121 (DGSS), N211, Y244, 262-264 (YLY), and K274. Residue E280 participates in Mg(2+) binding.

Belongs to the FBPase class 1 family. In terms of assembly, homotetramer. Requires Mg(2+) as cofactor.

It is found in the cytoplasm. It catalyses the reaction beta-D-fructose 1,6-bisphosphate + H2O = beta-D-fructose 6-phosphate + phosphate. It functions in the pathway carbohydrate biosynthesis; gluconeogenesis. This is Fructose-1,6-bisphosphatase class 1 from Aliivibrio fischeri (strain MJ11) (Vibrio fischeri).